The primary structure comprises 815 residues: Minichromosome loss protein 1 (815 aa).

WD repeat units lie at residues 11–50 (AHTD…EPDS), 53–90 (NHQD…EHTL), 93–132 (RTTL…QIFS), 135–174 (PAKA…LIKF), and 228–267 (ENHS…VVVE). Residues 306–362 (LKEENDPTKPLTSSKSKNRTSKELDDLFGSDDEQSQNVNDLDGNSANEENEFINHDG) are disordered. Positions 340 to 352 (SQNVNDLDGNSAN) are enriched in polar residues. A WD 6 repeat occupies 517 to 553 (ENESPVTISLSSSVVLVCTSAGYVRVFSRQGFPISIH).

In terms of assembly, interacts with pof3 and pol1.

Its subcellular location is the nucleus. The protein resides in the chromosome. In terms of biological role, has a role in regulating DNA replication complexes. Acts as a regulator of post DNA replication initiation. Associates with chromatin during G1 and S phases of mitosis. Required for the transcriptional repression of the outer repeats of the centromeric region. Acts as a polymerase alpha replication accessory factor and is important for S-phase DNA damage survival. Plays a role in lagging-strand synthesis and Ozaki fragment processing, in addition to DNA repair. This Schizosaccharomyces pombe (strain 972 / ATCC 24843) (Fission yeast) protein is Minichromosome loss protein 1 (mcl1).